The chain runs to 1030 residues: Importin beta-like SAD2 homolog (1030 aa).

Position 1 is an N-acetylmethionine (M1). An Importin N-terminal domain is found at 25 to 99 (AEQSLNQLQH…RNQILVFVSQ (75 aa)). Disordered regions lie at residues 886 to 928 (AAKA…GSTL) and 940 to 964 (SYSDDDDFSDDDFSDDEELESPIDE). 2 stretches are compositionally biased toward acidic residues: residues 890-924 (EEEEEDEDGDDDDMDEFQTDDEDEDGDDENPDETD) and 943-964 (DDDDFSDDDFSDDEELESPIDE).

This sequence belongs to the importin beta family.

The protein resides in the cytoplasm. It localises to the nucleus. Its function is as follows. Functions probably in nuclear protein import, either by acting as autonomous nuclear transport receptor or as an adapter-like protein in association with other importin subunits. This Arabidopsis thaliana (Mouse-ear cress) protein is Importin beta-like SAD2 homolog.